The sequence spans 150 residues: 3-hydroxyacyl-[acyl-carrier-protein] dehydratase FabZ (150 aa).

H52 is an active-site residue.

It belongs to the thioester dehydratase family. FabZ subfamily.

The protein localises to the cytoplasm. It catalyses the reaction a (3R)-hydroxyacyl-[ACP] = a (2E)-enoyl-[ACP] + H2O. Its function is as follows. Involved in unsaturated fatty acids biosynthesis. Catalyzes the dehydration of short chain beta-hydroxyacyl-ACPs and long chain saturated and unsaturated beta-hydroxyacyl-ACPs. This Cupriavidus metallidurans (strain ATCC 43123 / DSM 2839 / NBRC 102507 / CH34) (Ralstonia metallidurans) protein is 3-hydroxyacyl-[acyl-carrier-protein] dehydratase FabZ.